An 85-amino-acid chain; its full sequence is Selenoprotein W (85 aa).

Residues 10 to 13 (CGAU) constitute a cross-link (cysteinyl-selenocysteine (Cys-Sec); redox-active). Residue U13 is a non-standard amino acid, selenocysteine.

The protein belongs to the SelWTH family. Selenoprotein W subfamily. As to expression, expressed ubiquitously with predominant expression in the pituitary, spinal cord, sciatic nerve, cerebral cortex, cerebral nuclei, thalamus, cerebellum, muscle, cartilage, trachea, gizzard and artery. Weakly expressed in pancreas, testis, ovary, kidney and veins.

Its subcellular location is the cytoplasm. In terms of biological role, plays a role as a glutathione (GSH)-dependent antioxidant. May be involved in a redox-related process. May play a role in the myopathies of selenium deficiency. The sequence is that of Selenoprotein W from Gallus gallus (Chicken).